A 410-amino-acid polypeptide reads, in one-letter code: Ribulose bisphosphate carboxylase large chain (410 aa).

Substrate-binding residues include Asn100 and Thr150. The active-site Proton acceptor is the Lys152. Position 154 (Lys154) interacts with substrate. Mg(2+) is bound by residues Lys178, Asp180, and Glu181. Lys178 is subject to N6-carboxylysine. The active-site Proton acceptor is His271. 3 residues coordinate substrate: Arg272, His304, and Ser356.

It belongs to the RuBisCO large chain family. Type I subfamily. In terms of assembly, heterohexadecamer of 8 large chains and 8 small chains; disulfide-linked. The disulfide link is formed within the large subunit homodimers. It depends on Mg(2+) as a cofactor. In terms of processing, the disulfide bond which can form in the large chain dimeric partners within the hexadecamer appears to be associated with oxidative stress and protein turnover.

Its subcellular location is the plastid. It localises to the chloroplast. It catalyses the reaction 2 (2R)-3-phosphoglycerate + 2 H(+) = D-ribulose 1,5-bisphosphate + CO2 + H2O. It carries out the reaction D-ribulose 1,5-bisphosphate + O2 = 2-phosphoglycolate + (2R)-3-phosphoglycerate + 2 H(+). Its function is as follows. RuBisCO catalyzes two reactions: the carboxylation of D-ribulose 1,5-bisphosphate, the primary event in carbon dioxide fixation, as well as the oxidative fragmentation of the pentose substrate in the photorespiration process. Both reactions occur simultaneously and in competition at the same active site. The sequence is that of Ribulose bisphosphate carboxylase large chain (rbcL) from Gleichenia japonica (Urajiro).